Consider the following 1011-residue polypeptide: Histone deacetylase 9 (1011 aa).

A Phosphoserine modification is found at S22. The segment at 23–27 (PLDLR) is interaction with CTBP1. 3 disordered regions span residues 110-139 (RQEQEVERHRREQQLPPLRGKDRGRERAVA), 183-249 (TSLD…KDGN), and 262-304 (TESS…EQMV). The tract at residues 136-154 (RAVASTEVKQKLQEFLLSK) is interaction with MEF2. The interval 175–343 (LWYTAAHHTS…LPAVPSQLNA (169 aa)) is interaction with MAPK10. Polar residues predominate over residues 185 to 199 (LDQSSPPLSGTSPSY). Residues 208–219 (DAKDDFPLRKTA) show a composition bias toward basic and acidic residues. Residues 218–261 (TASEPNLKVRSRLKQKVAERRSSPLLRRKDGNVVTSFKKRMFEV) form an interaction with ETV6 region. S220 and S240 each carry phosphoserine. Positions 233-248 (KVAERRSSPLLRRKDG) are enriched in basic and acidic residues. Residues 262–285 (TESSVSSSSPGSGPSSPNNGPTGS) are compositionally biased toward low complexity. Position 451 is a phosphoserine (S451). The interval 494 to 536 (QLKQPGSHLEEAEEELQGDQAMQEDRAPSSGNSTRSDSSACVD) is disordered. Polar residues predominate over residues 522–532 (SSGNSTRSDSS). Position 554 is a phosphoserine (S554). Residues 631–978 (SATGIAYDPL…VNALLGNELE (348 aa)) are histone deacetylase. The Zn(2+) site is built by C646, C648, H654, and C731. The active site involves H783.

This sequence belongs to the histone deacetylase family. HD type 2 subfamily. In terms of assembly, homodimer. Interacts with CTBP1. The phosphorylated form interacts with 14-3-3. Interacts with HDAC1 and HDAC3, and probably with HDAC4 and HDAC5. Interacts with MEF2, MAPK10, ETV6, NCOR1 and BCL6. Interacts with FOXP3 in the absence of T-cell stimulation. Post-translationally, phosphorylated on Ser-220 and Ser-450; which promotes 14-3-3-binding, impairs interaction with MEF2, and antagonizes antimyogenic activity. Phosphorylated on Ser-240; which impairs nuclear accumulation. Isoform 7 is phosphorylated on Tyr-1010. Phosphorylated by the PKC kinases PKN1 and PKN2, impairing nuclear import. In terms of processing, sumoylated. As to expression, broadly expressed, with highest levels in brain, heart, muscle and testis. Isoform 3 is present in human bladder carcinoma cells (at protein level).

The protein resides in the nucleus. It catalyses the reaction N(6)-acetyl-L-lysyl-[histone] + H2O = L-lysyl-[histone] + acetate. Its activity is regulated as follows. Inhibited by Trichostatin A (TSA) and suberoylanilide hydroxamic acid. Functionally, responsible for the deacetylation of lysine residues on the N-terminal part of the core histones (H2A, H2B, H3 and H4). Histone deacetylation gives a tag for epigenetic repression and plays an important role in transcriptional regulation, cell cycle progression and developmental events. Represses MEF2-dependent transcription. In terms of biological role, isoform 3 lacks active site residues and therefore is catalytically inactive. Represses MEF2-dependent transcription by recruiting HDAC1 and/or HDAC3. Seems to inhibit skeletal myogenesis and to be involved in heart development. Protects neurons from apoptosis, both by inhibiting JUN phosphorylation by MAPK10 and by repressing JUN transcription via HDAC1 recruitment to JUN promoter. The chain is Histone deacetylase 9 (HDAC9) from Homo sapiens (Human).